The following is a 332-amino-acid chain: D-2-hydroxyacid dehydrogenase (NAD(+)) (332 aa).

Active-site residues include Arg237 and Glu266. Catalysis depends on His298, which acts as the Proton donor.

The protein belongs to the D-isomer specific 2-hydroxyacid dehydrogenase family. Monomer.

The catalysed reaction is a (2R)-2-hydroxycarboxylate + NAD(+) = a 2-oxocarboxylate + NADH + H(+). It carries out the reaction (2R)-hydroxy-4-methylpentanoate + NAD(+) = 4-methyl-2-oxopentanoate + NADH + H(+). The protein operates within amino-acid degradation; L-leucine degradation. Involved in the reductive branch of L-leucine fermentation. Catalyzes the NADH-dependent reduction of 4-methyl-2-oxopentanoate (2-oxoisocaproate) to (R)-2-hydroxy-4-methylpentanoate ((R)-2-hydroxyisocaproate). For the reverse reaction, the enzyme accepts (R)- but not (S)-2-hydroxy-4-methylpentanoate. Can also use 2-oxopentanoate, 2-oxohexanoate and phenylpyruvate but not 2-oxoisovalerate and 2-oxobutyrate. Cannot use NADPH. This Clostridioides difficile (Peptoclostridium difficile) protein is D-2-hydroxyacid dehydrogenase (NAD(+)).